Consider the following 266-residue polypeptide: Tryptophan synthase alpha chain (266 aa).

Catalysis depends on proton acceptor residues glutamate 49 and aspartate 60.

Belongs to the TrpA family. Tetramer of two alpha and two beta chains.

It catalyses the reaction (1S,2R)-1-C-(indol-3-yl)glycerol 3-phosphate + L-serine = D-glyceraldehyde 3-phosphate + L-tryptophan + H2O. The protein operates within amino-acid biosynthesis; L-tryptophan biosynthesis; L-tryptophan from chorismate: step 5/5. In terms of biological role, the alpha subunit is responsible for the aldol cleavage of indoleglycerol phosphate to indole and glyceraldehyde 3-phosphate. The polypeptide is Tryptophan synthase alpha chain (Synechococcus elongatus (strain ATCC 33912 / PCC 7942 / FACHB-805) (Anacystis nidulans R2)).